The primary structure comprises 252 residues: Imidazole glycerol phosphate synthase subunit HisF (252 aa).

Residues D11 and D130 contribute to the active site.

Belongs to the HisA/HisF family. In terms of assembly, heterodimer of HisH and HisF.

The protein localises to the cytoplasm. It carries out the reaction 5-[(5-phospho-1-deoxy-D-ribulos-1-ylimino)methylamino]-1-(5-phospho-beta-D-ribosyl)imidazole-4-carboxamide + L-glutamine = D-erythro-1-(imidazol-4-yl)glycerol 3-phosphate + 5-amino-1-(5-phospho-beta-D-ribosyl)imidazole-4-carboxamide + L-glutamate + H(+). It participates in amino-acid biosynthesis; L-histidine biosynthesis; L-histidine from 5-phospho-alpha-D-ribose 1-diphosphate: step 5/9. In terms of biological role, IGPS catalyzes the conversion of PRFAR and glutamine to IGP, AICAR and glutamate. The HisF subunit catalyzes the cyclization activity that produces IGP and AICAR from PRFAR using the ammonia provided by the HisH subunit. The protein is Imidazole glycerol phosphate synthase subunit HisF of Azoarcus sp. (strain BH72).